Reading from the N-terminus, the 159-residue chain is Lipoprotein LpqH (159 aa).

The first 21 residues, Met1–Gly21, serve as a signal peptide directing secretion. Cys22 carries N-palmitoyl cysteine lipidation. Cys22 is lipidated: S-diacylglycerol cysteine. The tract at residues Ser24–Lys51 is disordered. The span at Ser27–Gly49 shows a compositional bias: low complexity.

Belongs to the mycobacterial 19 kDa antigen family. In terms of processing, modified by Lgt on Cys-22 with an S-linked diacylglycerol with a mixture of C16, C18 and C19 fatty acids, signal peptide is removed by LspA, modifed by Lnt with an amide-linked mixture of C16 and C19 fatty acids.

It localises to the cell membrane. Might be involved in ligand transport. A host TLR2 agonist, modifies host gene expression in response to pathogen. In Mycobacterium bovis (strain ATCC BAA-935 / AF2122/97), this protein is Lipoprotein LpqH (lpqH).